A 351-amino-acid polypeptide reads, in one-letter code: Ribosomal RNA large subunit methyltransferase M (351 aa).

S-adenosyl-L-methionine contacts are provided by residues serine 186, 219–222 (APGG), aspartate 238, aspartate 258, and aspartate 274. Residue lysine 303 is the Proton acceptor of the active site.

It belongs to the class I-like SAM-binding methyltransferase superfamily. RNA methyltransferase RlmE family. RlmM subfamily. As to quaternary structure, monomer.

It is found in the cytoplasm. The enzyme catalyses cytidine(2498) in 23S rRNA + S-adenosyl-L-methionine = 2'-O-methylcytidine(2498) in 23S rRNA + S-adenosyl-L-homocysteine + H(+). Its function is as follows. Catalyzes the 2'-O-methylation at nucleotide C2498 in 23S rRNA. The protein is Ribosomal RNA large subunit methyltransferase M of Xylella fastidiosa (strain 9a5c).